The sequence spans 250 residues: Expansin-like B1 (250 aa).

The first 24 residues, 1–24 (MKHSHVLLLLFVQVIVLLPLLCLS), serve as a signal peptide directing secretion. In terms of domain architecture, Expansin-like EG45 spans 45-149 (RGHCGYGEFG…QRIPCRYAGY (105 aa)). N72 carries N-linked (GlcNAc...) asparagine glycosylation. In terms of domain architecture, Expansin-like CBD spans 163–245 (HYLAILVLYV…DWTAGATYDS (83 aa)).

Belongs to the expansin family. Expansin-like B subfamily.

It is found in the secreted. This chain is Expansin-like B1 (EXLB1), found in Arabidopsis thaliana (Mouse-ear cress).